Reading from the N-terminus, the 278-residue chain is Biotin synthase (278 aa).

The Radical SAM core domain maps to 1–227 (MQIMLCAISN…QSVVMVAGGR (227 aa)). Positions 16, 20, and 23 each coordinate [4Fe-4S] cluster. Residues C60, C95, and C153 each contribute to the [2Fe-2S] cluster site.

This sequence belongs to the radical SAM superfamily. Biotin synthase family. Homodimer. [4Fe-4S] cluster serves as cofactor. [2Fe-2S] cluster is required as a cofactor.

It catalyses the reaction (4R,5S)-dethiobiotin + (sulfur carrier)-SH + 2 reduced [2Fe-2S]-[ferredoxin] + 2 S-adenosyl-L-methionine = (sulfur carrier)-H + biotin + 2 5'-deoxyadenosine + 2 L-methionine + 2 oxidized [2Fe-2S]-[ferredoxin]. The protein operates within cofactor biosynthesis; biotin biosynthesis; biotin from 7,8-diaminononanoate: step 2/2. Its function is as follows. Catalyzes the conversion of dethiobiotin (DTB) to biotin by the insertion of a sulfur atom into dethiobiotin via a radical-based mechanism. In Campylobacter jejuni subsp. jejuni serotype O:6 (strain 81116 / NCTC 11828), this protein is Biotin synthase.